Consider the following 425-residue polypeptide: Kynurenine/alpha-aminoadipate aminotransferase, mitochondrial (425 aa).

The N-terminal 29 residues, 1–29 (MNYARFITAASAARNPSPIRTMTDILSRG), are a transit peptide targeting the mitochondrion. Arg20 is a substrate binding site. The residue at position 69 (Lys69) is an N6-acetyllysine. The substrate site is built by Tyr74 and Tyr142. The residue at position 179 (Lys179) is an N6-acetyllysine. The disordered stretch occupies residues 181-208 (EDAKNPQKNTPKFLYTVPNGNNPTGNSL). Over residues 198-208 (PNGNNPTGNSL) the composition is skewed to polar residues. Residue Asn202 participates in substrate binding. Residue Lys263 is modified to N6-(pyridoxal phosphate)lysine; alternate. Residues Lys263, Lys339, and Lys367 each carry the N6-acetyllysine; alternate modification. N6-succinyllysine; alternate occurs at positions 263, 339, and 367. Arg399 contributes to the substrate binding site. At Lys422 the chain carries N6-acetyllysine.

Belongs to the class-I pyridoxal-phosphate-dependent aminotransferase family. Homodimer. Pyridoxal 5'-phosphate serves as cofactor. In terms of tissue distribution, higher expression in the liver. Also found in heart, brain, kidney, pancreas, prostate, testis and ovary.

It localises to the mitochondrion. It carries out the reaction glycine + 2-oxoglutarate = glyoxylate + L-glutamate. The catalysed reaction is L-kynurenine + 2-oxoglutarate = kynurenate + L-glutamate + H2O. The enzyme catalyses L-kynurenine + glyoxylate = kynurenate + glycine + H2O. It catalyses the reaction 3-hydroxy-L-kynurenine + glyoxylate = xanthurenate + glycine + H2O. It carries out the reaction 2-oxohexanoate + L-kynurenine = L-2-aminohexanoate + kynurenate + H2O. The catalysed reaction is 3-phenylpyruvate + L-kynurenine = kynurenate + L-phenylalanine + H2O. The enzyme catalyses 4-methylsulfanyl-2-oxobutanoate + L-kynurenine = kynurenate + L-methionine + H2O. It catalyses the reaction 2-oxo-3-sulfanylpropanoate + L-kynurenine = kynurenate + L-cysteine + H2O. It carries out the reaction indole-3-pyruvate + L-kynurenine = kynurenate + L-tryptophan + H2O. The catalysed reaction is 2-oxopentanoate + L-kynurenine = L-2-aminopentanoate + kynurenate + H2O. The enzyme catalyses 4-methyl-2-oxopentanoate + L-kynurenine = kynurenate + L-leucine + H2O. It catalyses the reaction L-2-aminoadipate + 2-oxoglutarate = 2-oxoadipate + L-glutamate. It carries out the reaction glyoxylate + L-methionine = 4-methylsulfanyl-2-oxobutanoate + glycine. The catalysed reaction is L-2-aminoadipate + glyoxylate = 2-oxoadipate + glycine. The enzyme catalyses L-tyrosine + glyoxylate = 3-(4-hydroxyphenyl)pyruvate + glycine. It catalyses the reaction glyoxylate + L-phenylalanine = 3-phenylpyruvate + glycine. It carries out the reaction L-tryptophan + glyoxylate = indole-3-pyruvate + glycine. The catalysed reaction is L-leucine + glyoxylate = 4-methyl-2-oxopentanoate + glycine. The enzyme catalyses 2-oxobutanoate + L-kynurenine = (2S)-2-aminobutanoate + kynurenate + H2O. It catalyses the reaction 2-oxoadipate + L-kynurenine = L-2-aminoadipate + kynurenate + H2O. Its pathway is amino-acid degradation; L-lysine degradation via saccharopine pathway; glutaryl-CoA from L-lysine: step 4/6. With respect to regulation, kynurenine transaminase activity is competitively inhibited by aminoadipate, asparagine, glutamate, histidine, cysteine, lysine, 3-hydroxy-kynurenine and phenylalanine. Functionally, transaminase with broad substrate specificity. Has transaminase activity towards aminoadipate, kynurenine, methionine and glutamate. Shows activity also towards tryptophan, aspartate and hydroxykynurenine. Accepts a variety of oxo-acids as amino-group acceptors, with a preference for 2-oxoglutarate, 2-oxocaproic acid, phenylpyruvate and alpha-oxo-gamma-methiol butyric acid. Can also use glyoxylate as amino-group acceptor (in vitro). The polypeptide is Kynurenine/alpha-aminoadipate aminotransferase, mitochondrial (Homo sapiens (Human)).